Reading from the N-terminus, the 346-residue chain is Phosphoribosylformylglycinamidine cyclo-ligase (346 aa).

The protein belongs to the AIR synthase family.

It is found in the cytoplasm. It catalyses the reaction 2-formamido-N(1)-(5-O-phospho-beta-D-ribosyl)acetamidine + ATP = 5-amino-1-(5-phospho-beta-D-ribosyl)imidazole + ADP + phosphate + H(+). It functions in the pathway purine metabolism; IMP biosynthesis via de novo pathway; 5-amino-1-(5-phospho-D-ribosyl)imidazole from N(2)-formyl-N(1)-(5-phospho-D-ribosyl)glycinamide: step 2/2. The polypeptide is Phosphoribosylformylglycinamidine cyclo-ligase (Bacillus cereus (strain ZK / E33L)).